A 124-amino-acid polypeptide reads, in one-letter code: MGAANKKQELRLKRKARIRKKIAGTPERPRLSIFRSARHIYAQLIDDTKGVTFVTASSNEPDVKNNTELSGKNKSEVAVFVGKLIAGRAKDKGISSVVFDRGGFVYHGRVKAVSDGAREGGLNF.

It belongs to the universal ribosomal protein uL18 family. As to quaternary structure, part of the 50S ribosomal subunit; part of the 5S rRNA/L5/L18/L25 subcomplex. Contacts the 5S and 23S rRNAs.

Functionally, this is one of the proteins that bind and probably mediate the attachment of the 5S RNA into the large ribosomal subunit, where it forms part of the central protuberance. The polypeptide is Large ribosomal subunit protein uL18 (Desulfosudis oleivorans (strain DSM 6200 / JCM 39069 / Hxd3) (Desulfococcus oleovorans)).